We begin with the raw amino-acid sequence, 283 residues long: Thymidylate synthase (283 aa).

A dUMP-binding site is contributed by R22. C160 (nucleophile) is an active-site residue. DUMP-binding positions include 180-183, N191, and 221-223; these read RSCD and HIY. Residue D183 participates in (6R)-5,10-methylene-5,6,7,8-tetrahydrofolate binding. S282 is a (6R)-5,10-methylene-5,6,7,8-tetrahydrofolate binding site.

The protein belongs to the thymidylate synthase family. Bacterial-type ThyA subfamily. Homodimer.

It is found in the cytoplasm. It catalyses the reaction dUMP + (6R)-5,10-methylene-5,6,7,8-tetrahydrofolate = 7,8-dihydrofolate + dTMP. The protein operates within pyrimidine metabolism; dTTP biosynthesis. Catalyzes the reductive methylation of 2'-deoxyuridine-5'-monophosphate (dUMP) to 2'-deoxythymidine-5'-monophosphate (dTMP) while utilizing 5,10-methylenetetrahydrofolate (mTHF) as the methyl donor and reductant in the reaction, yielding dihydrofolate (DHF) as a by-product. This enzymatic reaction provides an intracellular de novo source of dTMP, an essential precursor for DNA biosynthesis. The polypeptide is Thymidylate synthase (Aliivibrio fischeri (strain ATCC 700601 / ES114) (Vibrio fischeri)).